Reading from the N-terminus, the 835-residue chain is Invasin (835 aa).

The 91-residue stretch at 451–541 (VITSEVTDDG…QQATVDVRFA (91 aa)) folds into the Big-1 domain.

This sequence belongs to the intimin/invasin family.

The protein localises to the cell outer membrane. Its function is as follows. Invasin is a protein that allows enteric bacteria to penetrate cultured mammalian cells. The entry of invasin in the cell is mediated by binding several beta-1 chain integrins. The chain is Invasin from Yersinia enterocolitica.